The chain runs to 443 residues: Arginine biosynthesis bifunctional protein ArgJ, mitochondrial (443 aa).

The substrate site is built by Thr-179, Lys-206, Thr-217, Glu-303, Asn-438, and Ser-443. The Nucleophile role is filled by Thr-217.

The protein belongs to the ArgJ family. As to quaternary structure, heterodimer of an alpha and a beta chain. Post-translationally, the alpha and beta chains are autoproteolytically processed from a single precursor protein within the mitochondrion.

It is found in the mitochondrion matrix. It carries out the reaction N(2)-acetyl-L-ornithine + L-glutamate = N-acetyl-L-glutamate + L-ornithine. It catalyses the reaction L-glutamate + acetyl-CoA = N-acetyl-L-glutamate + CoA + H(+). It participates in amino-acid biosynthesis; L-arginine biosynthesis; L-ornithine and N-acetyl-L-glutamate from L-glutamate and N(2)-acetyl-L-ornithine (cyclic): step 1/1. It functions in the pathway amino-acid biosynthesis; L-arginine biosynthesis; N(2)-acetyl-L-ornithine from L-glutamate: step 1/4. Functionally, catalyzes two activities which are involved in the cyclic version of arginine biosynthesis: the synthesis of acetylglutamate from glutamate and acetyl-CoA, and of ornithine by transacetylation between acetylornithine and glutamate. This is Arginine biosynthesis bifunctional protein ArgJ, mitochondrial from Eremothecium gossypii (strain ATCC 10895 / CBS 109.51 / FGSC 9923 / NRRL Y-1056) (Yeast).